We begin with the raw amino-acid sequence, 885 residues long: DDT domain-containing protein DDB_G0282237 (885 aa).

Residues 20–125 (EEYFVIKFTK…GEIVSFKKAN (106 aa)) enclose the WAC domain. Disordered regions lie at residues 141–184 (ESDE…INAL), 201–264 (DDEN…SVRK), and 367–431 (LEDT…KENE). A compositionally biased stretch (low complexity) spans 154–180 (SSSSSSTTTTTTTPTTPPTTTTTTSSS). The span at 210 to 264 (KNNGDTSSDKKGEKEKEKEKEKEKEKEKEKEKEKEKEKEKEKEKEKDSDTKSVRK) shows a compositional bias: basic and acidic residues. A coiled-coil region spans residues 217–260 (SDKKGEKEKEKEKEKEKEKEKEKEKEKEKEKEKEKEKEKDSDTK). Residues 367–379 (LEDTEEESVDIES) are compositionally biased toward acidic residues. Positions 380-396 (NDNSNSNGNSNSNNNLD) are enriched in low complexity. In terms of domain architecture, DDT spans 443 to 503 (SNTFGDFLMV…MKTIFTLPSY (61 aa)). Positions 530–565 (FQNEVKRIAIEEKEKQEKLKQLEEQNIRMLNLANEL) form a coiled coil. 2 disordered regions span residues 562 to 632 (ANEL…WKEE) and 707 to 744 (KQDD…QKKP). Acidic residues predominate over residues 567–577 (GSDDEDDEMKL). Residues 578-603 (DEDGNEIKKDVEMKDNDGTKDTKKDD) show a composition bias toward basic and acidic residues. 2 coiled-coil regions span residues 593–628 (NDGT…GEEE) and 674–782 (ASEK…RDRN). 2 stretches are compositionally biased toward acidic residues: residues 604–631 (EENE…EWKE) and 715–729 (AEDD…EEQQ).

The protein resides in the nucleus. The polypeptide is DDT domain-containing protein DDB_G0282237 (Dictyostelium discoideum (Social amoeba)).